The primary structure comprises 340 residues: L-threonine 3-dehydrogenase (340 aa).

A Zn(2+)-binding site is contributed by Cys-38. Catalysis depends on charge relay system residues Thr-40 and His-43. Residues His-63, Glu-64, Cys-93, Cys-96, Cys-99, and Cys-107 each coordinate Zn(2+). NAD(+)-binding positions include Ile-175, Asp-195, Arg-200, 261–263 (LGI), and 285–286 (IY).

The protein belongs to the zinc-containing alcohol dehydrogenase family. As to quaternary structure, homotetramer. The cofactor is Zn(2+).

It localises to the cytoplasm. It catalyses the reaction L-threonine + NAD(+) = (2S)-2-amino-3-oxobutanoate + NADH + H(+). Its pathway is amino-acid degradation; L-threonine degradation via oxydo-reductase pathway; glycine from L-threonine: step 1/2. Functionally, catalyzes the NAD(+)-dependent oxidation of L-threonine to 2-amino-3-ketobutyrate. The sequence is that of L-threonine 3-dehydrogenase from Xanthomonas oryzae pv. oryzae (strain MAFF 311018).